The chain runs to 338 residues: UPF0104 membrane protein MTH_1261 (338 aa).

The next 8 helical transmembrane spans lie at 6–26, 36–56, 124–144, 149–169, 231–251, 254–274, 275–295, and 310–330; these read AILI…IGPG, DPVY…LFTL, LDTF…VLYF, WILA…FLAL, ISFL…TAFG, ISLL…MIPL, LPGG…YAGV, and ISFW…GSSV.

The protein belongs to the UPF0104 family.

It localises to the cell membrane. The sequence is that of UPF0104 membrane protein MTH_1261 from Methanothermobacter thermautotrophicus (strain ATCC 29096 / DSM 1053 / JCM 10044 / NBRC 100330 / Delta H) (Methanobacterium thermoautotrophicum).